The sequence spans 530 residues: Inactive ubiquitin carboxyl-terminal hydrolase 17-like protein 8 (530 aa).

In terms of domain architecture, USP spans 80–375; sequence AGLQNMGNTC…QAYVLFYIQK (296 aa). Over residues 382 to 392 the composition is skewed to basic and acidic residues; the sequence is SESVSRGREPR. Disordered stretches follow at residues 382 to 412 and 493 to 530; these read SESV…KRDH and NSTD…LVCQ. The segment covering 495 to 510 has biased composition (polar residues); the sequence is TDQESMNTGTLASLQG. Basic residues predominate over residues 511–524; it reads RTRRSKGKNKHSKR.

It belongs to the peptidase C19 family. USP17 subfamily.

Its subcellular location is the nucleus. The protein localises to the endoplasmic reticulum. In Homo sapiens (Human), this protein is Inactive ubiquitin carboxyl-terminal hydrolase 17-like protein 8 (USP17L8).